Reading from the N-terminus, the 553-residue chain is Serine/threonine-protein phosphatase 2B catalytic subunit A1 (553 aa).

Ser2 is modified (N-acetylserine). Asp119, His121, and Asp147 together coordinate Fe cation. Zn(2+) is bound by residues Asp147 and Asn179. His180 serves as the catalytic Proton donor. The Zn(2+) site is built by His228 and His317. The disordered stretch occupies residues 413–447 (LDPESEPKAAEETVKARANATKETGTPSDEKASSA). Basic and acidic residues predominate over residues 417–427 (SEPKAAEETVK).

It belongs to the PPP phosphatase family. PP-2B subfamily. Composed of two components (A and B), the A component is the catalytic subunit and the B component confers calcium sensitivity. It depends on Fe(3+) as a cofactor. Zn(2+) serves as cofactor.

It carries out the reaction O-phospho-L-seryl-[protein] + H2O = L-seryl-[protein] + phosphate. The enzyme catalyses O-phospho-L-threonyl-[protein] + H2O = L-threonyl-[protein] + phosphate. Its function is as follows. Calcium-dependent, calmodulin-stimulated protein phosphatase. This subunit may have a role in the calmodulin activation of calcineurin. The chain is Serine/threonine-protein phosphatase 2B catalytic subunit A1 (CNA1) from Saccharomyces cerevisiae (strain ATCC 204508 / S288c) (Baker's yeast).